The chain runs to 559 residues: Glucose-6-phosphate isomerase (559 aa).

Glutamate 352 serves as the catalytic Proton donor. Catalysis depends on residues histidine 383 and lysine 511.

The protein belongs to the GPI family.

It localises to the cytoplasm. It catalyses the reaction alpha-D-glucose 6-phosphate = beta-D-fructose 6-phosphate. The protein operates within carbohydrate biosynthesis; gluconeogenesis. Its pathway is carbohydrate degradation; glycolysis; D-glyceraldehyde 3-phosphate and glycerone phosphate from D-glucose: step 2/4. Its function is as follows. Catalyzes the reversible isomerization of glucose-6-phosphate to fructose-6-phosphate. The polypeptide is Glucose-6-phosphate isomerase (Chlorobaculum tepidum (strain ATCC 49652 / DSM 12025 / NBRC 103806 / TLS) (Chlorobium tepidum)).